Consider the following 223-residue polypeptide: Ribose-5-phosphate isomerase A (223 aa).

Substrate is bound by residues 28-31 (TGST), 81-84 (DGAD), and 94-97 (KGGG). The active-site Proton acceptor is the glutamate 103. Residue lysine 121 participates in substrate binding.

It belongs to the ribose 5-phosphate isomerase family. As to quaternary structure, homodimer.

It carries out the reaction aldehydo-D-ribose 5-phosphate = D-ribulose 5-phosphate. It participates in carbohydrate degradation; pentose phosphate pathway; D-ribose 5-phosphate from D-ribulose 5-phosphate (non-oxidative stage): step 1/1. Functionally, catalyzes the reversible conversion of ribose-5-phosphate to ribulose 5-phosphate. The polypeptide is Ribose-5-phosphate isomerase A (Janthinobacterium sp. (strain Marseille) (Minibacterium massiliensis)).